Reading from the N-terminus, the 516-residue chain is Cytochrome P450 1A2 (516 aa).

O-linked (GlcNAc) serine glycosylation occurs at serine 69. Phenylalanine 226 is a binding site for substrate. Residue cysteine 458 participates in heme binding.

Belongs to the cytochrome P450 family. As to quaternary structure, interacts with PGRMC1; the interaction requires PGRMC1 homodimerization. Heme serves as cofactor.

The protein localises to the endoplasmic reticulum membrane. The protein resides in the microsome membrane. It carries out the reaction an organic molecule + reduced [NADPH--hemoprotein reductase] + O2 = an alcohol + oxidized [NADPH--hemoprotein reductase] + H2O + H(+). The enzyme catalyses 17beta-estradiol + reduced [NADPH--hemoprotein reductase] + O2 = 2-hydroxy-17beta-estradiol + oxidized [NADPH--hemoprotein reductase] + H2O + H(+). The catalysed reaction is 17beta-estradiol + reduced [NADPH--hemoprotein reductase] + O2 = 4-hydroxy-17beta-estradiol + oxidized [NADPH--hemoprotein reductase] + H2O + H(+). It catalyses the reaction estrone + reduced [NADPH--hemoprotein reductase] + O2 = 2-hydroxyestrone + oxidized [NADPH--hemoprotein reductase] + H2O + H(+). It carries out the reaction estrone + reduced [NADPH--hemoprotein reductase] + O2 = 4-hydroxyestrone + oxidized [NADPH--hemoprotein reductase] + H2O + H(+). The enzyme catalyses cholesterol + reduced [NADPH--hemoprotein reductase] + O2 = 25-hydroxycholesterol + oxidized [NADPH--hemoprotein reductase] + H2O + H(+). The catalysed reaction is all-trans-retinol + reduced [NADPH--hemoprotein reductase] + O2 = all-trans-retinal + oxidized [NADPH--hemoprotein reductase] + 2 H2O + H(+). It catalyses the reaction all-trans-retinal + reduced [NADPH--hemoprotein reductase] + O2 = all-trans-retinoate + oxidized [NADPH--hemoprotein reductase] + H2O + 2 H(+). It carries out the reaction (5Z,8Z,11Z,14Z)-eicosatetraenoate + reduced [NADPH--hemoprotein reductase] + O2 = (14R,15S)-epoxy-(5Z,8Z,11Z)-eicosatrienoate + oxidized [NADPH--hemoprotein reductase] + H2O + H(+). The enzyme catalyses (5Z,8Z,11Z,14Z)-eicosatetraenoate + reduced [NADPH--hemoprotein reductase] + O2 = (14S,15R)-epoxy-(5Z,8Z,11Z)-eicosatrienoate + oxidized [NADPH--hemoprotein reductase] + H2O + H(+). The catalysed reaction is (5Z,8Z,11Z,14Z,17Z)-eicosapentaenoate + reduced [NADPH--hemoprotein reductase] + O2 = (17R,18S)-epoxy-(5Z,8Z,11Z,14Z)-eicosatetraenoate + oxidized [NADPH--hemoprotein reductase] + H2O + H(+). It catalyses the reaction (4Z,7Z,10Z,13Z,16Z,19Z)-docosahexaenoate + reduced [NADPH--hemoprotein reductase] + O2 = (19R,20S)-epoxy-(4Z,7Z,10Z,13Z,16Z)-docosapentaenoate + oxidized [NADPH--hemoprotein reductase] + H2O + H(+). It carries out the reaction (5S)-hydroperoxy-(6E,8Z,11Z,14Z)-eicosatetraenoate = 5-oxo-(6E,8Z,11Z,14Z)-eicosatetraenoate + H2O. The enzyme catalyses (12S)-hydroperoxy-(5Z,8Z,10E,14Z)-eicosatetraenoate = 12-oxo-(5Z,8Z,10E,14Z)-eicosatetraenoate + H2O. The catalysed reaction is (15S)-hydroperoxy-(5Z,8Z,11Z,13E)-eicosatetraenoate = 15-oxo-(5Z,8Z,11Z,13E)-eicosatetraenoate + H2O. It catalyses the reaction (13S)-hydroperoxy-(9Z,11E)-octadecadienoate = 13-oxo-(9Z,11E)-octadecadienoate + H2O. It carries out the reaction (5Z,8Z,11Z,14Z)-eicosatetraenoate + reduced [NADPH--hemoprotein reductase] + O2 = 13-hydroxy-(5Z,8Z,11Z,14Z)-eicosatetraenoate + oxidized [NADPH--hemoprotein reductase] + H2O + H(+). The enzyme catalyses (5Z,8Z,11Z,14Z)-eicosatetraenoate + reduced [NADPH--hemoprotein reductase] + O2 = 19-hydroxy-(5Z,8Z,11Z,14Z)-eicosatetraenoate + oxidized [NADPH--hemoprotein reductase] + H2O + H(+). The catalysed reaction is (9Z,12Z)-octadecadienoate + reduced [NADPH--hemoprotein reductase] + O2 = 11-hydroxy-(9Z,12Z)-octadecadienoate + oxidized [NADPH--hemoprotein reductase] + H2O + H(+). The protein operates within cofactor metabolism; retinol metabolism. It functions in the pathway steroid metabolism; cholesterol metabolism. Its pathway is lipid metabolism; arachidonate metabolism. A cytochrome P450 monooxygenase involved in the metabolism of various endogenous substrates, including fatty acids, steroid hormones and vitamins. Mechanistically, uses molecular oxygen inserting one oxygen atom into a substrate, and reducing the second into a water molecule, with two electrons provided by NADPH via cytochrome P450 reductase (NADPH--hemoprotein reductase). Catalyzes the hydroxylation of carbon-hydrogen bonds. Exhibits high catalytic activity for the formation of hydroxyestrogens from estrone (E1) and 17beta-estradiol (E2), namely 2-hydroxy E1 and E2. Metabolizes cholesterol toward 25-hydroxycholesterol, a physiological regulator of cellular cholesterol homeostasis. May act as a major enzyme for all-trans retinoic acid biosynthesis in the liver. Catalyzes two successive oxidative transformation of all-trans retinol to all-trans retinal and then to the active form all-trans retinoic acid. Primarily catalyzes stereoselective epoxidation of the last double bond of polyunsaturated fatty acids (PUFA), displaying a strong preference for the (R,S) stereoisomer. Catalyzes bisallylic hydroxylation and omega-1 hydroxylation of PUFA. May also participate in eicosanoids metabolism by converting hydroperoxide species into oxo metabolites (lipoxygenase-like reaction, NADPH-independent). Plays a role in the oxidative metabolism of xenobiotics. Catalyzes the N-hydroxylation of heterocyclic amines and the O-deethylation of phenacetin. Metabolizes caffeine via N3-demethylation. This Callithrix jacchus (White-tufted-ear marmoset) protein is Cytochrome P450 1A2 (CYP1A2).